Here is a 418-residue protein sequence, read N- to C-terminus: Ankyrin repeat and SOCS box protein 6 (418 aa).

6 ANK repeats span residues 65–95 (EGVSNALLKMAELGLTRAAAVLLQSGANLNF), 100–129 (TYYTALHIAVLRNQPDMVELLVRHGADINR), 134–164 (HESSPLDLASEEPERLPCLQRLLDLGADVNA), 168–203 (NGKTALLHALASSDGVQIHNTENIRLLLEGGADVKA), 224–253 (CGDKEEAPMINRFCFQVTQLLLAHGADPSE), and 258–287 (ESLTHICLKSFKLHFPLLCFLLESGAAYNC). The SOCS box domain maps to 358-413 (ALHASLRQLESYPPPLKHLCRVSIRLCLRPWPVDTKVKALPLPDRLKWYLLSAHSD).

Belongs to the ankyrin SOCS box (ASB) family. As to quaternary structure, binds APS. Identified in a complex with ELOB and ELOC. Interacts with CUL5 and RNF7. Interacts with SQSTM1. As to expression, detected in adipocytes.

The protein resides in the cytoplasm. It participates in protein modification; protein ubiquitination. Probable substrate-recognition component of a SCF-like ECS (Elongin-Cullin-SOCS-box protein) E3 ubiquitin-protein ligase complex which mediates the ubiquitination and subsequent proteasomal degradation of target proteins. May play a role in the regulation of cell proliferation and autophagy by promoting the ubiquitination and degradation of SQSTM1. The sequence is that of Ankyrin repeat and SOCS box protein 6 (Asb6) from Mus musculus (Mouse).